The sequence spans 199 residues: 3-isopropylmalate dehydratase small subunit (199 aa).

This sequence belongs to the LeuD family. LeuD type 1 subfamily. In terms of assembly, heterodimer of LeuC and LeuD.

The enzyme catalyses (2R,3S)-3-isopropylmalate = (2S)-2-isopropylmalate. It functions in the pathway amino-acid biosynthesis; L-leucine biosynthesis; L-leucine from 3-methyl-2-oxobutanoate: step 2/4. Functionally, catalyzes the isomerization between 2-isopropylmalate and 3-isopropylmalate, via the formation of 2-isopropylmaleate. In Bacillus velezensis (strain DSM 23117 / BGSC 10A6 / LMG 26770 / FZB42) (Bacillus amyloliquefaciens subsp. plantarum), this protein is 3-isopropylmalate dehydratase small subunit.